The primary structure comprises 428 residues: D-amino acid dehydrogenase (428 aa).

Residue 3-17 (VVILGSGVVGVASAY) participates in FAD binding.

This sequence belongs to the DadA oxidoreductase family. FAD is required as a cofactor.

It catalyses the reaction a D-alpha-amino acid + A + H2O = a 2-oxocarboxylate + AH2 + NH4(+). The protein operates within amino-acid degradation; D-alanine degradation; NH(3) and pyruvate from D-alanine: step 1/1. In terms of biological role, oxidative deamination of D-amino acids. The sequence is that of D-amino acid dehydrogenase from Burkholderia pseudomallei (strain K96243).